Consider the following 211-residue polypeptide: ATP-dependent Clp protease proteolytic subunit (211 aa).

The active-site Nucleophile is the Ser-107. Residue His-132 is part of the active site.

This sequence belongs to the peptidase S14 family. Fourteen ClpP subunits assemble into 2 heptameric rings which stack back to back to give a disk-like structure with a central cavity, resembling the structure of eukaryotic proteasomes.

Its subcellular location is the cytoplasm. The enzyme catalyses Hydrolysis of proteins to small peptides in the presence of ATP and magnesium. alpha-casein is the usual test substrate. In the absence of ATP, only oligopeptides shorter than five residues are hydrolyzed (such as succinyl-Leu-Tyr-|-NHMec, and Leu-Tyr-Leu-|-Tyr-Trp, in which cleavage of the -Tyr-|-Leu- and -Tyr-|-Trp bonds also occurs).. Functionally, cleaves peptides in various proteins in a process that requires ATP hydrolysis. Has a chymotrypsin-like activity. Plays a major role in the degradation of misfolded proteins. The sequence is that of ATP-dependent Clp protease proteolytic subunit from Xanthobacter autotrophicus (strain ATCC BAA-1158 / Py2).